A 280-amino-acid polypeptide reads, in one-letter code: Golgi phosphoprotein 3-like A (280 aa).

The interval 1-32 (MTTLIRRGRRAEEGQERRADSEDSIKDKDEEE) is disordered. Positions 10 to 32 (RAEEGQERRADSEDSIKDKDEEE) are enriched in basic and acidic residues. A 1,2-diacyl-sn-glycero-3-phospho-(1D-myo-inositol 4-phosphate) contacts are provided by tryptophan 62, arginine 71, arginine 152, and arginine 155. The beta-hairpin required for oligomerization stretch occupies residues 171–182 (EKQNFLLFDMTT).

This sequence belongs to the GOLPH3/VPS74 family. As to quaternary structure, homooligomer.

It localises to the golgi apparatus. It is found in the golgi stack membrane. The protein resides in the trans-Golgi network membrane. Its function is as follows. Phosphatidylinositol-4-phosphate-binding protein that may play a role in the process of vesicle budding at the Golgi and anterograde transport to the plasma membrane. This Xenopus laevis (African clawed frog) protein is Golgi phosphoprotein 3-like A (golph3l-a).